The chain runs to 278 residues: Phosphatidylglycerol--prolipoprotein diacylglyceryl transferase (278 aa).

The next 4 membrane-spanning stretches (helical) occupy residues 19 to 39 (WYGI…INEG), 49 to 69 (FIDF…IYYV), 83 to 103 (IIAI…GLIV), and 112 to 132 (MLPP…AQVI). Residue R134 participates in a 1,2-diacyl-sn-glycero-3-phospho-(1'-sn-glycerol) binding. 3 helical membrane-spanning segments follow: residues 174–194 (QPTY…ILSL), 204–224 (GEVF…VEGM), and 235–255 (IRVS…LWVY).

This sequence belongs to the Lgt family.

The protein localises to the cell membrane. The catalysed reaction is L-cysteinyl-[prolipoprotein] + a 1,2-diacyl-sn-glycero-3-phospho-(1'-sn-glycerol) = an S-1,2-diacyl-sn-glyceryl-L-cysteinyl-[prolipoprotein] + sn-glycerol 1-phosphate + H(+). It participates in protein modification; lipoprotein biosynthesis (diacylglyceryl transfer). Catalyzes the transfer of the diacylglyceryl group from phosphatidylglycerol to the sulfhydryl group of the N-terminal cysteine of a prolipoprotein, the first step in the formation of mature lipoproteins. This Lactobacillus gasseri (strain ATCC 33323 / DSM 20243 / BCRC 14619 / CIP 102991 / JCM 1131 / KCTC 3163 / NCIMB 11718 / NCTC 13722 / AM63) protein is Phosphatidylglycerol--prolipoprotein diacylglyceryl transferase.